We begin with the raw amino-acid sequence, 266 residues long: Putative pyruvate, phosphate dikinase regulatory protein (266 aa).

147-154 provides a ligand contact to ADP; the sequence is GLSRTSKT.

This sequence belongs to the pyruvate, phosphate/water dikinase regulatory protein family. PDRP subfamily.

It catalyses the reaction N(tele)-phospho-L-histidyl/L-threonyl-[pyruvate, phosphate dikinase] + ADP = N(tele)-phospho-L-histidyl/O-phospho-L-threonyl-[pyruvate, phosphate dikinase] + AMP + H(+). The enzyme catalyses N(tele)-phospho-L-histidyl/O-phospho-L-threonyl-[pyruvate, phosphate dikinase] + phosphate + H(+) = N(tele)-phospho-L-histidyl/L-threonyl-[pyruvate, phosphate dikinase] + diphosphate. Functionally, bifunctional serine/threonine kinase and phosphorylase involved in the regulation of the pyruvate, phosphate dikinase (PPDK) by catalyzing its phosphorylation/dephosphorylation. The sequence is that of Putative pyruvate, phosphate dikinase regulatory protein from Clostridium perfringens (strain 13 / Type A).